Consider the following 149-residue polypeptide: Macrodomain Ter protein (149 aa).

This sequence belongs to the MatP family. Homodimer.

The protein localises to the cytoplasm. Functionally, required for spatial organization of the terminus region of the chromosome (Ter macrodomain) during the cell cycle. Prevents early segregation of duplicated Ter macrodomains during cell division. Binds specifically to matS, which is a 13 bp signature motif repeated within the Ter macrodomain. This Vibrio vulnificus (strain YJ016) protein is Macrodomain Ter protein.